Here is a 122-residue protein sequence, read N- to C-terminus: U7 snRNA-associated Sm-like protein LSm10 (122 aa).

The Sm domain occupies 16–88 (SLIILLQGLQ…VRYVHIPDGV (73 aa)).

It belongs to the snRNP Sm proteins family. As to quaternary structure, component of the heptameric ring U7 snRNP complex, or U7 Sm protein core complex, at least composed of LSM10, LSM11, SNRPB, SNRPD3, SNRPE, SNRPF, SNRPG and U7 snRNA. Formation of the U7 snRNP is an ATP-dependent process mediated by a specialized SMN complex containing at least the Sm protein core complex and additionally, the U7-specific LSM10 and LSM11 proteins. Interacts with CLNS1A and SMN. Post-translationally, not methylated. Methylation is not necessary for interaction with SMN.

The protein localises to the nucleus. Its function is as follows. Appears to function in the U7 snRNP complex that is involved in histone 3'-end processing. Increases U7 snRNA levels but not histone 3'-end pre-mRNA processing activity, when overexpressed. Required for cell cycle progression from G1 to S phases. Binds specifically to U7 snRNA. Binds to the downstream cleavage product (DCP) of histone pre-mRNA. The protein is U7 snRNA-associated Sm-like protein LSm10 (Lsm10) of Mus musculus (Mouse).